A 409-amino-acid polypeptide reads, in one-letter code: uncharacterized protein (409 aa).

10 helical membrane passes run 18–38 (ALSAWRFVTVFGVVGLLADVV), 47–67 (GPLLASLGATGLVVGVVTGVG), 100–120 (VVTVPLLGIAGALWVACALVI), 159–179 (VGAMIGPLTVAGMLAITGNAY), 180–200 (APALGVLTLPGGAALALLLWL), 232–252 (FWLYCGFTAITMLGFGTFGLL), 260–280 (GVLAAAMVPVVYAAAMAADAL), 302–322 (ILSILVVLFAFTDNVTMVVIG), 355–375 (GVFAAGLGAATAGGGALIGWL), and 380–400 (IGTLVVVVIALELMALVMMFA).

It localises to the cell membrane. This is an uncharacterized protein from Mycobacterium tuberculosis (strain CDC 1551 / Oshkosh).